A 344-amino-acid chain; its full sequence is Meiotic expression up-regulated protein 26 (344 aa).

It is found in the nucleus. The polypeptide is Meiotic expression up-regulated protein 26 (meu26) (Schizosaccharomyces pombe (strain 972 / ATCC 24843) (Fission yeast)).